Reading from the N-terminus, the 102-residue chain is uncharacterized protein (102 aa).

This is an uncharacterized protein from Escherichia coli (strain K12).